Here is a 740-residue protein sequence, read N- to C-terminus: DNA ligase (740 aa).

The interval 1–20 (MGPGLTLSGMTEQSSLFPAP) is disordered. Residues 56–60 (DAEYD), 105–106 (SI), and Glu-142 contribute to the NAD(+) site. Catalysis depends on Lys-144, which acts as the N6-AMP-lysine intermediate. Residues Arg-165, Glu-201, Lys-322, and Lys-346 each coordinate NAD(+). Positions 471, 474, 489, and 495 each coordinate Zn(2+). Positions 654–740 (AATLPLAGMT…RGAPPNAGGG (87 aa)) constitute a BRCT domain.

The protein belongs to the NAD-dependent DNA ligase family. LigA subfamily. Mg(2+) serves as cofactor. Requires Mn(2+) as cofactor.

It catalyses the reaction NAD(+) + (deoxyribonucleotide)n-3'-hydroxyl + 5'-phospho-(deoxyribonucleotide)m = (deoxyribonucleotide)n+m + AMP + beta-nicotinamide D-nucleotide.. Its function is as follows. DNA ligase that catalyzes the formation of phosphodiester linkages between 5'-phosphoryl and 3'-hydroxyl groups in double-stranded DNA using NAD as a coenzyme and as the energy source for the reaction. It is essential for DNA replication and repair of damaged DNA. The chain is DNA ligase from Acidovorax ebreus (strain TPSY) (Diaphorobacter sp. (strain TPSY)).